Here is a 491-residue protein sequence, read N- to C-terminus: Probable malate:quinone oxidoreductase (491 aa).

Belongs to the MQO family. FAD serves as cofactor.

The catalysed reaction is (S)-malate + a quinone = a quinol + oxaloacetate. It participates in carbohydrate metabolism; tricarboxylic acid cycle; oxaloacetate from (S)-malate (quinone route): step 1/1. The protein is Probable malate:quinone oxidoreductase of Leifsonia xyli subsp. xyli (strain CTCB07).